The primary structure comprises 301 residues: Acetyl-coenzyme A carboxylase carboxyl transferase subunit beta (301 aa).

In terms of domain architecture, CoA carboxyltransferase N-terminal spans 25-294 (LWIKCPETGE…SAANDMNSGA (270 aa)).

This sequence belongs to the AccD/PCCB family. Acetyl-CoA carboxylase is a heterohexamer composed of biotin carboxyl carrier protein (AccB), biotin carboxylase (AccC) and two subunits each of ACCase subunit alpha (AccA) and ACCase subunit beta (AccD).

The protein resides in the cytoplasm. The catalysed reaction is N(6)-carboxybiotinyl-L-lysyl-[protein] + acetyl-CoA = N(6)-biotinyl-L-lysyl-[protein] + malonyl-CoA. Its pathway is lipid metabolism; malonyl-CoA biosynthesis; malonyl-CoA from acetyl-CoA: step 1/1. In terms of biological role, component of the acetyl coenzyme A carboxylase (ACC) complex. Biotin carboxylase (BC) catalyzes the carboxylation of biotin on its carrier protein (BCCP) and then the CO(2) group is transferred by the transcarboxylase to acetyl-CoA to form malonyl-CoA. This is Acetyl-coenzyme A carboxylase carboxyl transferase subunit beta from Rhizobium leguminosarum bv. trifolii (strain WSM1325).